Here is a 328-residue protein sequence, read N- to C-terminus: Ornithine carbamoyltransferase, catabolic (328 aa).

Carbamoyl phosphate-binding positions include 56-59 (STRT), Gln-83, Arg-107, and 134-137 (HPTQ). L-ornithine is bound by residues Asn-166, Asp-230, and 234 to 235 (SM). Carbamoyl phosphate-binding positions include 270–271 (CL) and Arg-315.

It belongs to the aspartate/ornithine carbamoyltransferase superfamily. OTCase family.

It localises to the cytoplasm. The enzyme catalyses carbamoyl phosphate + L-ornithine = L-citrulline + phosphate + H(+). The protein operates within amino-acid degradation; L-arginine degradation via ADI pathway; carbamoyl phosphate from L-arginine: step 2/2. Its function is as follows. Reversibly catalyzes the transfer of the carbamoyl group from carbamoyl phosphate (CP) to the N(epsilon) atom of ornithine (ORN) to produce L-citrulline. The protein is Ornithine carbamoyltransferase, catabolic (arcB) of Borreliella afzelii (Borrelia afzelii).